A 152-amino-acid chain; its full sequence is ASP external chaperone (152 aa).

Positions 1–22 are cleaved as a signal peptide; that stretch reads MNKPVTLLLATLLAPLSGQLCA.

Forms a complex with the serine protease ASP in the periplasm. After translocation of the ASP-ORF2 complex from the periplasm to the extracellular space, the complex is dissociated in a pH-dependent manner.

It is found in the periplasm. Its subcellular location is the secreted. Its activity is regulated as follows. Degraded by ASP after secretion and dissociation of the ASP-ORF2 complex. Required for the production of the active form of the Aeromonas extracellular serine protease (ASP). Acts as a chaperone that helps ASP form an active structure in the periplasm. Formation of a complex with ASP in the periplasm also inactivates the protease activity and likely protects ASP from intrinsic proteases. Dissociation of the ASP-ORF2 complex after secretion in the extracellular space generates an active ASP. The chain is ASP external chaperone from Aeromonas sobria.